The sequence spans 455 residues: tRNA modification GTPase MnmE (455 aa).

3 residues coordinate (6S)-5-formyl-5,6,7,8-tetrahydrofolate: Lys29, Glu91, and Arg131. A TrmE-type G domain is found at 226-378; it reads GLKVALVGLP…LIQELLKLAG (153 aa). A K(+)-binding site is contributed by Asn236. GTP is bound by residues 236 to 241, 255 to 261, 280 to 283, and 341 to 344; these read NVGKSS, TDLPGTT, DTAG, and NKAD. Ser240 serves as a coordination point for Mg(2+). K(+)-binding residues include Thr255, Leu257, and Thr260. Thr261 provides a ligand contact to Mg(2+). Residue Lys455 coordinates (6S)-5-formyl-5,6,7,8-tetrahydrofolate.

This sequence belongs to the TRAFAC class TrmE-Era-EngA-EngB-Septin-like GTPase superfamily. TrmE GTPase family. Homodimer. Heterotetramer of two MnmE and two MnmG subunits. Requires K(+) as cofactor.

It localises to the cytoplasm. Functionally, exhibits a very high intrinsic GTPase hydrolysis rate. Involved in the addition of a carboxymethylaminomethyl (cmnm) group at the wobble position (U34) of certain tRNAs, forming tRNA-cmnm(5)s(2)U34. The polypeptide is tRNA modification GTPase MnmE (Prochlorococcus marinus (strain SARG / CCMP1375 / SS120)).